The primary structure comprises 400 residues: Large envelope protein (400 aa).

Residue M1 is modified to N-acetylmethionine. Disordered regions lie at residues 1 to 42 and 84 to 118; these read MGGY…NNPD and ILTTVPATPPPASTNRQSGRQPTPISPPLRDSHPQ. G2 carries N-myristoyl glycine; by host lipidation. The segment at 2-119 is pre-S1; it reads GGYSSKPRKG…PPLRDSHPQA (118 aa). A pre-S region spans residues 2–174; sequence GGYSSKPRKG…FSRTGDPVPK (173 aa). Residues 2-181 lie on the Virion surface; in external conformation side of the membrane; sequence GGYSSKPRKG…VPKMENTTSG (180 aa). Over 2–253 the chain is Intravirion; in internal conformation; it reads GGYSSKPRKG…PGYRWMCLRR (252 aa). N-linked (GlcNAc...) asparagine glycosylation occurs at Y4. Residues 120 to 174 are pre-S2; the sequence is MQWNSTTFHQALLDPRVRGLYFPAGGSSSGTANPVPTTASPISSIFSRTGDPVPK. Residues 182–202 traverse the membrane as a helical segment; sequence FLGPLLVLQAGFFLLTRILTI. At 203–253 the chain is on the intravirion; in external conformation side; the sequence is PQSLDSWWTSLNFLGGAPACPGQNSQSPTSNHSPTSCPPICPGYRWMCLRR. A helical transmembrane segment spans residues 254 to 274; the sequence is FIIFLFILLLCLIFLLVLLDY. The Virion surface portion of the chain corresponds to 275-348; the sequence is QGMLPVCPLI…WASVRFSWLS (74 aa). N-linked (GlcNAc...) asparagine; by host glycosylation is present at N320. The helical transmembrane segment at 349 to 369 threads the bilayer; sequence LLAPFVQWFVGLSPTVWLSVI. At 370–375 the chain is on the intravirion side; the sequence is WMMWYW. A helical transmembrane segment spans residues 376–398; the sequence is GPSLYNILSPFLPLLPIFFCLWV. Residues 399–400 are Virion surface-facing; it reads YI.

It belongs to the orthohepadnavirus major surface antigen family. In terms of assembly, in its internal form (Li-HBsAg), interacts with the capsid protein and with the isoform S. Interacts with host chaperone CANX. As to quaternary structure, associates with host chaperone CANX through its pre-S2 N glycan; this association may be essential for isoform M proper secretion. Interacts with isoform L. Interacts with the antigens of satellite virus HDV (HDVAgs); this interaction is required for encapsidation of HDV genomic RNA. Post-translationally, isoform M is N-terminally acetylated by host at a ratio of 90%, and N-glycosylated by host at the pre-S2 region. In terms of processing, myristoylated.

The protein resides in the virion membrane. Functionally, the large envelope protein exists in two topological conformations, one which is termed 'external' or Le-HBsAg and the other 'internal' or Li-HBsAg. In its external conformation the protein attaches the virus to cell receptors and thereby initiating infection. This interaction determines the species specificity and liver tropism. This attachment induces virion internalization predominantly through caveolin-mediated endocytosis. The large envelope protein also assures fusion between virion membrane and endosomal membrane. In its internal conformation the protein plays a role in virion morphogenesis and mediates the contact with the nucleocapsid like a matrix protein. Its function is as follows. The middle envelope protein plays an important role in the budding of the virion. It is involved in the induction of budding in a nucleocapsid independent way. In this process the majority of envelope proteins bud to form subviral lipoprotein particles of 22 nm of diameter that do not contain a nucleocapsid. The protein is Large envelope protein of Homo sapiens (Human).